We begin with the raw amino-acid sequence, 508 residues long: Maturase K (508 aa).

The protein belongs to the intron maturase 2 family. MatK subfamily.

It localises to the plastid. Its subcellular location is the chloroplast. Its function is as follows. Usually encoded in the trnK tRNA gene intron. Probably assists in splicing its own and other chloroplast group II introns. The polypeptide is Maturase K (Abrus precatorius (Indian licorice)).